The sequence spans 840 residues: V-type proton ATPase subunit a, vacuolar isoform (840 aa).

N-acetylalanine is present on alanine 2. Topologically, residues 2–404 are cytoplasmic; the sequence is AEKEEAIFRS…DCYGIAQYRE (403 aa). Residues 117–145 adopt a coiled-coil conformation; it reads LEERLIQMEDATDQIEVQKNDLEQYRFIL. The helical transmembrane segment at 405-423 threads the bilayer; the sequence is INAGLPTIVTFPFMFAIMF. Residues 424–425 are Vacuolar-facing; sequence GD. A helical transmembrane segment spans residues 426–442; that stretch reads MGHGFLMTLAALSLVLN. The Cytoplasmic segment spans residues 443–456; it reads EKKINKMKRGEIFD. Residues 457–486 traverse the membrane as a helical segment; the sequence is MAFTGRYIILLMGVFSMYTGFLYNDIFSKT. Residues 487-534 lie on the Vacuolar side of the membrane; sequence MTIFKSGWKWPDHWKKGESITATSVGTYPIGLDWAWHGTENALLFSNS. Residues 535 to 554 form a helical membrane-spanning segment; sequence YKMKLSILMGFIHMTYSYFF. Over 555 to 572 the chain is Cytoplasmic; the sequence is SLANHLYFNSMIDIIGNF. A helical membrane pass occupies residues 573–593; sequence IPGLLFMQGIFGYLSVCIVYK. Residues 594 to 636 lie on the Vacuolar side of the membrane; that stretch reads WAVDWVKDGKPAPGLLNMLINMFLSPGTIDDELYPHQAKVQVF. Residues 637–656 traverse the membrane as a helical segment; the sequence is LLLMALVCIPWLLLVKPLHF. Over 657 to 719 the chain is Cytoplasmic; it reads KFTHKKKSHE…DIMIHQVIHT (63 aa). The helical transmembrane segment at 720–744 threads the bilayer; the sequence is IEFCLNCVSHTASYLRLWALSLAHA. Topologically, residues 745–765 are vacuolar; the sequence is QLSSVLWTMTIQIAFGFRGFV. A helical transmembrane segment spans residues 766-804; it reads GVFMTVALFAMWFALTCAVLVLMEGTSAMLHSLRLHWVE. Over 805 to 840 the chain is Cytoplasmic; the sequence is SMSKFFVGEGLPYEPFAFEYKDMEVAVASASSSASS.

The protein belongs to the V-ATPase 116 kDa subunit family. V-ATPase is a heteromultimeric enzyme composed of a peripheral catalytic V1 complex (components A to H) attached to an integral membrane V0 proton pore complex (components: a, c, c', c'', d, e, f and VOA1). Glycosylated.

Its subcellular location is the vacuole membrane. Subunit of the V0 complex of vacuolar(H+)-ATPase (V-ATPase), a multisubunit enzyme composed of a peripheral complex (V1) that hydrolyzes ATP and a membrane integral complex (V0) that translocates protons. V-ATPase is responsible for acidifying and maintaining the pH of intracellular compartments. Is present only in vacuolar V-ATPase complexes; enzymes containing this subunit have a 4-fold higher ratio of proton transport to ATP hydrolysis than complexes containing the Golgi/endosomal isoform and undergo reversible dissociation of V1 and V0 in response to glucose depletion. The polypeptide is V-type proton ATPase subunit a, vacuolar isoform (Saccharomyces cerevisiae (strain ATCC 204508 / S288c) (Baker's yeast)).